Reading from the N-terminus, the 381-residue chain is Gustatory and pheromone receptor 39a, isoform D (381 aa).

Over 1-43 (MKRNAFEELRVQLRTLKWLGVLRFTIDFNKCLVRENASEERSA) the chain is Cytoplasmic. Residues 44-64 (WLYLIGVVGITCSLIVYSTYF) form a helical membrane-spanning segment. At 65 to 78 (PSHFIMGKHNTTGN) the chain is on the extracellular side. N-linked (GlcNAc...) asparagine glycosylation is present at N74. Residues 79-101 (CYALINIRSCSIVTMLIYTQLYI) traverse the membrane as a helical segment. Over 102 to 128 (QRFRFVALLQSILRFNQISGSHREEGR) the chain is Cytoplasmic. A helical transmembrane segment spans residues 129 to 149 (FAFYYYTHLSLLIICMLNYAY). The Extracellular portion of the chain corresponds to 150–172 (GYWTAGVRLTTIPIYLLQYGFSY). A helical membrane pass occupies residues 173-193 (LFLGQVVVLFACIQQILLSIL). Residues 194-234 (KYYNQVVLKNIKSSKESREFYYNFCKYNQVIWLSYTEINHC) lie on the Cytoplasmic side of the membrane. The helical transmembrane segment at 235 to 255 (FGLLLLLVTGLILLITPSGPF) threads the bilayer. The Extracellular segment spans residues 256 to 273 (YLVSTIFEGRFRQNWQFS). The helical transmembrane segment at 274-294 (LMSFTAILWSLPWIVLLVLAM) threads the bilayer. Topologically, residues 295 to 350 (GRNDVQKEANKTAKMLTKVPRTGTGLDRMIEKFLLKNLRQKPILTAYGFFALDKST) are cytoplasmic. The chain crosses the membrane as a helical span at residues 351–371 (LFKLFTAIFTYMVILVQFKEM). Residues 372-381 (ENSTKSINKF) are Extracellular-facing. An N-linked (GlcNAc...) asparagine glycan is attached at N373.

Belongs to the insect chemoreceptor superfamily. Gustatory receptor (GR) family. Gr21a subfamily. In terms of tissue distribution, expressed in the adult labellar chemosensory neurons and adult thorax and abdomen.

The protein localises to the cell membrane. Its function is as follows. Gustatory receptor which mediates acceptance or avoidance behavior, depending on its substrates. Plays a role in sustaining courtship behavior in males, possibly through the reception of a stimulating arrestant pheromone. The protein is Gustatory and pheromone receptor 39a, isoform D (Gr39a) of Drosophila melanogaster (Fruit fly).